A 403-amino-acid polypeptide reads, in one-letter code: L-cysteine:1D-myo-inositol 2-amino-2-deoxy-alpha-D-glucopyranoside ligase (403 aa).

Cys-43 lines the Zn(2+) pocket. L-cysteinyl-5'-AMP is bound by residues 43-46, Thr-58, 81-83, and Trp-223; these read CGIT and NVT. Positions 45-55 match the 'HIGH' region motif; sequence ITPYDATHLGH. Position 227 (Cys-227) interacts with Zn(2+). Position 245–247 (245–247) interacts with L-cysteinyl-5'-AMP; sequence GAD. Residue His-252 participates in Zn(2+) binding. Val-278 is an L-cysteinyl-5'-AMP binding site. Residues 284–288 carry the 'KMSKS' region motif; that stretch reads KMSKS.

It belongs to the class-I aminoacyl-tRNA synthetase family. MshC subfamily. Monomer. Zn(2+) is required as a cofactor.

It carries out the reaction 1D-myo-inositol 2-amino-2-deoxy-alpha-D-glucopyranoside + L-cysteine + ATP = 1D-myo-inositol 2-(L-cysteinylamino)-2-deoxy-alpha-D-glucopyranoside + AMP + diphosphate + H(+). Functionally, catalyzes the ATP-dependent condensation of GlcN-Ins and L-cysteine to form L-Cys-GlcN-Ins. This is L-cysteine:1D-myo-inositol 2-amino-2-deoxy-alpha-D-glucopyranoside ligase from Acidothermus cellulolyticus (strain ATCC 43068 / DSM 8971 / 11B).